A 911-amino-acid chain; its full sequence is DNA replication licensing factor mcm4 (911 aa).

Positions 1–132 (MSSSQQSGRA…RPGVSTPSSL (132 aa)) are disordered. Phosphoserine is present on residues Ser37, Ser38, and Ser41. Over residues 42–56 (TRLTTPRTTARTPLA) the composition is skewed to low complexity. The span at 63–84 (ESSSPGPNIPQSSRSHLLSQRN) shows a compositional bias: polar residues. Ser92 is modified (phosphoserine). One can recognise an MCM domain in the interval 493-702 (IYDILSRSLA…LDRKLANHIV (210 aa)). 545 to 552 (GDPSTSKS) is a binding site for ATP. The short motif at 677 to 680 (SRFD) is the Arginine finger element.

This sequence belongs to the MCM family. Component of the mcm2-7 complex. The complex forms a toroidal hexameric ring with the proposed subunit order mcm2-mcm6-mcm4-mcm7-mcm3-mcm5. The heterodimers of mcm4/mcm6 and mcm3/mcm5 interact with mcm2 and mcm7.

It is found in the nucleus. The enzyme catalyses ATP + H2O = ADP + phosphate + H(+). Its function is as follows. Acts as a component of the mcm2-7 complex (mcm complex) which is the putative replicative helicase essential for 'once per cell cycle' DNA replication initiation and elongation in eukaryotic cells. The active ATPase sites in the mcm2-7 ring are formed through the interaction surfaces of two neighboring subunits such that a critical structure of a conserved arginine finger motif is provided in trans relative to the ATP-binding site of the Walker A box of the adjacent subunit. The six ATPase active sites, however, are likely to contribute differentially to the complex helicase activity. Required for S phase execution. This is DNA replication licensing factor mcm4 (mcm4) from Schizosaccharomyces pombe (strain 972 / ATCC 24843) (Fission yeast).